Reading from the N-terminus, the 491-residue chain is UDP-N-acetylmuramoyl-L-alanyl-D-glutamate--2,6-diaminopimelate ligase (491 aa).

S30 is a UDP-N-acetyl-alpha-D-muramoyl-L-alanyl-D-glutamate binding site. ATP is bound at residue 108-114; sequence GTNGKTT. UDP-N-acetyl-alpha-D-muramoyl-L-alanyl-D-glutamate-binding positions include N149, 150–151, S177, and R185; that span reads TT. K217 is modified (N6-carboxylysine). Meso-2,6-diaminopimelate-binding positions include R383, 407–410, G457, and E461; that span reads DNPR. The Meso-diaminopimelate recognition motif motif lies at 407–410; it reads DNPR.

The protein belongs to the MurCDEF family. MurE subfamily. Requires Mg(2+) as cofactor. Post-translationally, carboxylation is probably crucial for Mg(2+) binding and, consequently, for the gamma-phosphate positioning of ATP.

The protein resides in the cytoplasm. It catalyses the reaction UDP-N-acetyl-alpha-D-muramoyl-L-alanyl-D-glutamate + meso-2,6-diaminopimelate + ATP = UDP-N-acetyl-alpha-D-muramoyl-L-alanyl-gamma-D-glutamyl-meso-2,6-diaminopimelate + ADP + phosphate + H(+). It functions in the pathway cell wall biogenesis; peptidoglycan biosynthesis. In terms of biological role, catalyzes the addition of meso-diaminopimelic acid to the nucleotide precursor UDP-N-acetylmuramoyl-L-alanyl-D-glutamate (UMAG) in the biosynthesis of bacterial cell-wall peptidoglycan. This Bacillus cereus (strain ATCC 14579 / DSM 31 / CCUG 7414 / JCM 2152 / NBRC 15305 / NCIMB 9373 / NCTC 2599 / NRRL B-3711) protein is UDP-N-acetylmuramoyl-L-alanyl-D-glutamate--2,6-diaminopimelate ligase.